A 370-amino-acid polypeptide reads, in one-letter code: Putative agmatine deiminase (370 aa).

Cys-361 acts as the Amidino-cysteine intermediate in catalysis.

Belongs to the agmatine deiminase family.

The enzyme catalyses agmatine + H2O = N-carbamoylputrescine + NH4(+). The sequence is that of Putative agmatine deiminase from Shewanella baltica (strain OS223).